We begin with the raw amino-acid sequence, 99 residues long: Integration host factor subunit alpha (99 aa).

The segment at 49 to 71 is disordered; that stretch reads FGNFDLRDKNQRPGRNPKTGEDI.

The protein belongs to the bacterial histone-like protein family. Heterodimer of an alpha and a beta chain.

In terms of biological role, this protein is one of the two subunits of integration host factor, a specific DNA-binding protein that functions in genetic recombination as well as in transcriptional and translational control. This is Integration host factor subunit alpha from Shewanella denitrificans (strain OS217 / ATCC BAA-1090 / DSM 15013).